Reading from the N-terminus, the 1028-residue chain is Carbamoyl phosphate synthase large chain (1028 aa).

The tract at residues 1–409 (MPPRRDLKKI…ALMKALRGLE (409 aa)) is carboxyphosphate synthetic domain. ATP contacts are provided by arginine 129, arginine 169, glycine 175, glycine 176, glutamate 208, valine 210, glutamate 215, glycine 241, valine 242, histidine 243, glutamine 285, and glutamate 299. The 196-residue stretch at 133-328 (QEAMQRIGLE…IAKIAALLAV (196 aa)) folds into the ATP-grasp 1 domain. Residues glutamine 285, glutamate 299, and asparagine 301 each coordinate Mg(2+). 3 residues coordinate Mn(2+): glutamine 285, glutamate 299, and asparagine 301. The interval 410-549 (RDVRALAGVR…YSTYELEDEV (140 aa)) is oligomerization domain. The tract at residues 550-933 (WPSQKPKVVI…AYYKAELGAG (384 aa)) is carbamoyl phosphate synthetic domain. An ATP-grasp 2 domain is found at 674–866 (HALCQRLGIP…LAKLAALIAV (193 aa)). ATP-binding residues include arginine 710, arginine 750, leucine 752, glutamate 757, glycine 782, valine 783, histidine 784, serine 785, glutamine 825, and glutamate 837. Positions 825, 837, and 839 each coordinate Mg(2+). Mn(2+) is bound by residues glutamine 825, glutamate 837, and asparagine 839. The region spanning 934 to 1028 (QRLPLSGRVR…QDWHQKAPRG (95 aa)) is the MGS-like domain. The interval 934-1028 (QRLPLSGRVR…QDWHQKAPRG (95 aa)) is allosteric domain.

This sequence belongs to the CarB family. In terms of assembly, composed of two chains; the small (or glutamine) chain promotes the hydrolysis of glutamine to ammonia, which is used by the large (or ammonia) chain to synthesize carbamoyl phosphate. Tetramer of heterodimers (alpha,beta)4. Requires Mg(2+) as cofactor. Mn(2+) is required as a cofactor.

The enzyme catalyses hydrogencarbonate + L-glutamine + 2 ATP + H2O = carbamoyl phosphate + L-glutamate + 2 ADP + phosphate + 2 H(+). It catalyses the reaction hydrogencarbonate + NH4(+) + 2 ATP = carbamoyl phosphate + 2 ADP + phosphate + 2 H(+). It participates in amino-acid biosynthesis; L-arginine biosynthesis; carbamoyl phosphate from bicarbonate: step 1/1. It functions in the pathway pyrimidine metabolism; UMP biosynthesis via de novo pathway; (S)-dihydroorotate from bicarbonate: step 1/3. Functionally, large subunit of the glutamine-dependent carbamoyl phosphate synthetase (CPSase). CPSase catalyzes the formation of carbamoyl phosphate from the ammonia moiety of glutamine, carbonate, and phosphate donated by ATP, constituting the first step of 2 biosynthetic pathways, one leading to arginine and/or urea and the other to pyrimidine nucleotides. The large subunit (synthetase) binds the substrates ammonia (free or transferred from glutamine from the small subunit), hydrogencarbonate and ATP and carries out an ATP-coupled ligase reaction, activating hydrogencarbonate by forming carboxy phosphate which reacts with ammonia to form carbamoyl phosphate. This is Carbamoyl phosphate synthase large chain from Thermus thermophilus (strain ATCC 27634 / DSM 579 / HB8).